Here is a 673-residue protein sequence, read N- to C-terminus: G-protein-signaling modulator 1 (673 aa).

The segment at 1–507 (MASPAPPAAE…DLLSKFQSSR (507 aa)) is mediates association with membranes. 9 TPR repeats span residues 28 to 61 (CLELALEGERLCKAGDFKAGVAFFEAAVQVGTED), 66 to 99 (SAIYSQLGNAYFYLKEYARALQFHKHDLLLARTI), 106 to 139 (AKASGNLGNTLKVLGRFDEAIVCCQRHLDIAQEQ), 146 to 178 (ARALYNIGNVYHAKGKQLSWNAAQDPGHLPPDV), 180 to 199 (ETLHRASEFYERNLSLVKEL), 206 to 239 (GRAYGNLGNTHYLLGNFTEATTFHKERLAIAKEF), 246 to 279 (RRAYSNLGNAHIFLGRFDVAAEHYKKTLQLSRQI), 286 to 319 (AQACYSLGNTYTLLQDYERAAEYHLRHLVIAQEL), and 326 to 359 (GRACWSLGNAYVSMGSPAQALTFAKKHLQISQEI). The segment at 361–485 (DRNGELTARM…VRVQVPRTGI (125 aa)) is interaction with STK11/LKB1. Position 410 is a phosphoserine (S410). An Omega-N-methylarginine modification is found at R418. Residues 420–439 (PLDREQNGETHHTGDWRGPS) are compositionally biased toward basic and acidic residues. The segment at 420–477 (PLDREQNGETHHTGDWRGPSRDSLPLPMRSRKYQEGPDAIERRPREGSHSPLDSADVR) is disordered. A phosphoserine mark is found at S442, S467, S469, S490, and S491. The span at 451 to 467 (KYQEGPDAIERRPREGS) shows a compositional bias: basic and acidic residues. The GoLoco 1 domain maps to 493-515 (EECFFDLLSKFQSSRMDDQRCPL). Positions 510–544 (DQRCPLEEGQAGAAEATAAPTLEERAAQPSVTASP) are disordered. The segment covering 516–530 (EEGQAGAAEATAAPT) has biased composition (low complexity). Phosphoserine is present on residues S543 and S567. GoLoco domains are found at residues 546–568 (TEEFFDLIASSQSRRLDDQRASV), 594–616 (GDEFFNMLIKYQSSRIDDQRCPP), and 628–650 (DEDFFSLIQRVQAKRMDEQRVDL). Disordered regions lie at residues 609–628 (IDDQRCPPPDVLPRGPTMPD) and 645–673 (EQRVDLAGSPDQEASGLPDPRQQCPPGAS). S653 is subject to Phosphoserine.

Belongs to the GPSM family. In terms of assembly, interacts with INSC/inscuteable and FRMPD1. Interacts with GNAI1, GNAI2 and GNAI3 preferentially in their GDP-bound state. May also interact with GNAO1. Interacts with STK11/LKB1 and MACF1. In terms of processing, phosphorylation regulates interaction with G(i/o) alpha. In terms of tissue distribution, isoform 4 is specifically expressed in brain by neurons and also detected in testis, liver, kidney, heart and pancreas (at protein level). Highly expressed in cerebellum and subventricular zone-olfactory bulb system. Isoform 2 and isoform 3 are specifically expressed in heart and are also detected in brain.

Its subcellular location is the endoplasmic reticulum membrane. The protein localises to the golgi apparatus membrane. The protein resides in the cell membrane. It is found in the cytoplasm. It localises to the cytosol. Functionally, guanine nucleotide dissociation inhibitor (GDI) which functions as a receptor-independent activator of heterotrimeric G-protein signaling. Keeps G(i/o) alpha subunit in its GDP-bound form thus uncoupling heterotrimeric G-proteins signaling from G protein-coupled receptors. Controls spindle orientation and asymmetric cell fate of cerebral cortical progenitors. May also be involved in macroautophagy in intestinal cells. May play a role in drug addiction. This is G-protein-signaling modulator 1 (Gpsm1) from Rattus norvegicus (Rat).